We begin with the raw amino-acid sequence, 523 residues long: MPSFRDDHIIVIQTGSLYHRATFGLAESLEPPTIRVRTRVGKNDNGEYVFTNKEDINMEDPNVKTDETKVETSESTSEQPSNSNVTEEKNMGSSFHSECKVDDFTPLPNEIQPIQRGRVVDWEALKAFWKHLYSLLLKDPNDTTFRYPVCLVIPTYWSLYDRELATQFFFEECQVPGFTIAYEPLMGLYAIGILHGLVIDIGYEKTDITPILDGQIIFTATQQLPLGGRYMTQHLQNLLRESLPTLKSSGQYVSKEDITELFAEQVKCSEIAQVVRDEQDTAKDPVKALTSTNNVEEEDPAEDIGKIIASGQTRAYLAQKEREKNGESEKDEKPDNTDVEFQTIAIEPLGDCIVGRERFKICEPIFHRPSNETVSLPEAIYITIKNYAANYKRRNDLWENIIVLGCGSRIRGFRECLIQQLQFKYQLSGSLEPYYAAQGTDSILGMTTMPPTPYPALINPCKILPDYFPSWKPDAGTNAMFEELAFLGGSIVAKTSFNESVSSHYVTLEEYAQHGPTAIHTKQ.

The span at isoleucine 56–threonine 72 shows a compositional bias: basic and acidic residues. Disordered stretches follow at residues isoleucine 56–glycine 92 and glutamine 319–valine 339. Residues glutamine 79–glycine 92 are compositionally biased toward polar residues. Basic and acidic residues predominate over residues glutamine 319–asparagine 336.

The protein belongs to the actin family. Component of the RSC complex composed of at least arp9, arp42, rsc1, rsc4, rsc7, rsc9, rsc58, sfh1, snf21, ssr1, ssr2, ssr3 and ssr4. The complex interacts with histone and histone variant components of centromeric chromatin. Component of the SWI/SNF global transcription activator complex composed of at least arp9, arp42, snf5, snf22, snf30, sbf59, sol1, ssr1, ssr2, ssr3, ssr4 and tfg3.

Its subcellular location is the cytoplasm. The protein resides in the nucleus. Its function is as follows. Component of the chromatin structure remodeling complex (RSC), which is involved in transcription regulation and nucleosome positioning. Controls particularly membrane and organelle development genes. Part of the SWI/SNF complex, an ATP-dependent chromatin remodeling complex, required for the positive and negative regulation of gene expression of a large number of genes. It changes chromatin structure by altering DNA-histone contacts within a nucleosome, leading eventually to a change in nucleosome position, thus facilitating or repressing binding of gene-specific transcription factors. The sequence is that of SWI/SNF and RSC complexes subunit arp9 (arp9) from Schizosaccharomyces pombe (strain 972 / ATCC 24843) (Fission yeast).